The primary structure comprises 87 residues: UPF0248 protein TON_0940 (87 aa).

Belongs to the UPF0248 family.

The polypeptide is UPF0248 protein TON_0940 (Thermococcus onnurineus (strain NA1)).